The following is a 70-amino-acid chain: Small ribosomal subunit protein bS21 (70 aa).

It belongs to the bacterial ribosomal protein bS21 family.

The chain is Small ribosomal subunit protein bS21 (rpsU) from Helicobacter pylori (strain J99 / ATCC 700824) (Campylobacter pylori J99).